The chain runs to 1003 residues: Putative helicase MOV-10 (1003 aa).

Lys148 carries the post-translational modification N6-acetyllysine. A phosphothreonine mark is found at Thr160 and Thr254. Residue Ser432 is modified to Phosphoserine. 524–531 serves as a coordination point for ATP; the sequence is GPPGTGKT. The DEAG box signature appears at 645 to 648; sequence DEAG. The tract at residues 921-965 is interaction with AGO2 and APOBEC3G; that stretch reads NPLLLGHDPDWKVFLEFCKENGGYTGCPFPAKLDLQQGQNLLQGL. The interval 968 to 1003 is disordered; it reads LSPSTSGLKSHDYLPQEREGEEGLSLQVEPEWRNEL. Residues Ser969 and Ser977 each carry the phosphoserine modification. Residues 976–985 show a composition bias toward basic and acidic residues; that stretch reads KSHDYLPQER.

The protein belongs to the DNA2/NAM7 helicase family. SDE3 subfamily. Interacts with DICER1, AGO2, TARBP2, EIF6 and RPL7A (60S ribosome subunit); they form a large RNA-induced silencing complex (RISC). Interacts with APOBEC3G in an RNA-dependent manner. Interacts with TRIM71 (via NHL repeats) in an RNA-dependent manner. Interacts with both protein products of LIRE1, ORF1p and ORF2p. Interacts with TUT4 and, to a lesser extent, TUT7; the interactions are RNA-dependent. Interacts with AGO2, TNRC6B and UPF1; the interactions are direct and RNA-dependent. Interacts with FMR1; this interaction is direct, occurs in an RNA-dependent manner on polysomes and induces association of MOV10 with RNAs. Interacts with SHFL; the interaction increases in presence of RNA. Interacts with DHX34; the interaction is-RNA independent. Interacts with RBM46. Ubiquitinated by the DCX(DCAF12) complex that specifically recognizes the glutamate-leucine (Glu-Leu) degron at the C-terminus, leading to its degradation.

The protein resides in the cytoplasm. Its subcellular location is the P-body. It is found in the cytoplasmic ribonucleoprotein granule. The protein localises to the stress granule. It localises to the nucleus. It catalyses the reaction ATP + H2O = ADP + phosphate + H(+). Its function is as follows. 5' to 3' RNA helicase that is involved in a number of cellular roles ranging from mRNA metabolism and translation, modulation of viral infectivity, inhibition of retrotransposition, or regulation of synaptic transmission. Plays an important role in innate antiviral immunity by promoting type I interferon production. Mechanistically, specifically uses IKKepsilon/IKBKE as the mediator kinase for IRF3 activation. Contributes to UPF1 mRNA target degradation by translocation along 3' UTRs. Required for microRNA (miRNA)-mediated gene silencing by the RNA-induced silencing complex (RISC). Required for both miRNA-mediated translational repression and miRNA-mediated cleavage of complementary mRNAs by RISC. In cooperation with FMR1, regulates miRNA-mediated translational repression by AGO2. Restricts retrotransposition of long interspersed element-1 (LINE-1) in cooperation with TUT4 and TUT7 counteracting the RNA chaperonne activity of L1RE1. Facilitates LINE-1 uridylation by TUT4 and TUT7. Required for embryonic viability and for normal central nervous system development and function. Plays two critical roles in early brain development: suppresses retroelements in the nucleus by directly inhibiting cDNA synthesis, while regulates cytoskeletal mRNAs to influence neurite outgrowth in the cytosol. May function as a messenger ribonucleoprotein (mRNP) clearance factor. This Bos taurus (Bovine) protein is Putative helicase MOV-10 (MOV10).